The chain runs to 731 residues: MEKRRMNLPTGPDTLCFDKDEFMKEDFDVDHFVSDCRKRVQLEELRDDLELYYKLLKTAMVELINKDYADFVNLSTNLVGMDRALNQLSVPLGQLREEVLSLRSSVSEGILAVDERMSKQEDIRKKKMSVLRLIQVIRSVEKIEKILNSQSSKDVSSQEASSPLLTGQVLERIATEFNQLQFHAVQSKGMPLLDKVRPRIAGITAMLQQSLEGLLLEGLQTSDVDIVRHCLRTYATIDKTQDAEALVGQVLVKPYVNEVIVEQFVESHPSSLQLMYNKLLEFVPHHCRLLREVTGGAVSSEKGTIVPGYDFLVNSVWPEIVRGLEEKLPSLFNPGDPDAFHQKYTVSMDFVQRFERQCGSQASVKRLRAHPAYHNFSNKWNLPVYFQIRFREVAGSLEAALTDGLEDAPAGSPYCLLASHRTWISLGKCWSDEMFLPLLAHRLWRLTLQILARFSVFVSELSVRPVSNESAKETKKPLTGSKDPSEDQGSHASEASAASISSTQLVYVVSDLGRLQEWLPDLLETVKQKLEMIGFKNFSSISAALEDSQSALSAHVPALSSRIVQDLSESCFSYLKSALEVPRLYRRTNKEVPSTASSYVDSALKPLYQLQSGHGDKVQPAVMQSWLQEALSDSTHRYFETVSDVLNSVKKMEESLKRLKQARRSPATNPVSSSGGGMSDDDKIRLQLALDVEHLGEQIQRMGLQTSDIKSFPALMELVLAARDQAAAEQP.

Disordered stretches follow at residues Glu-469 to Ser-496 and Leu-659 to Asp-680.

Belongs to the COG2 family. As to quaternary structure, component of the conserved oligomeric Golgi complex which is composed of eight different subunits and is required for normal Golgi morphology and localization.

The protein localises to the golgi apparatus membrane. In terms of biological role, required for normal Golgi morphology and function. The chain is Conserved oligomeric Golgi complex subunit 2 (Cog2) from Mus musculus (Mouse).